Reading from the N-terminus, the 261-residue chain is Thiazole synthase (261 aa).

The active-site Schiff-base intermediate with DXP is the K97. 1-deoxy-D-xylulose 5-phosphate is bound by residues G158, 184–185 (AG), and 206–207 (AS).

It belongs to the ThiG family. As to quaternary structure, homotetramer. Forms heterodimers with either ThiH or ThiS.

The protein localises to the cytoplasm. The enzyme catalyses [ThiS sulfur-carrier protein]-C-terminal-Gly-aminoethanethioate + 2-iminoacetate + 1-deoxy-D-xylulose 5-phosphate = [ThiS sulfur-carrier protein]-C-terminal Gly-Gly + 2-[(2R,5Z)-2-carboxy-4-methylthiazol-5(2H)-ylidene]ethyl phosphate + 2 H2O + H(+). The protein operates within cofactor biosynthesis; thiamine diphosphate biosynthesis. Its function is as follows. Catalyzes the rearrangement of 1-deoxy-D-xylulose 5-phosphate (DXP) to produce the thiazole phosphate moiety of thiamine. Sulfur is provided by the thiocarboxylate moiety of the carrier protein ThiS. In vitro, sulfur can be provided by H(2)S. The sequence is that of Thiazole synthase from Corynebacterium diphtheriae (strain ATCC 700971 / NCTC 13129 / Biotype gravis).